The following is a 473-amino-acid chain: Serine incorporator 3 (473 aa).

Topologically, residues 1-96 (MGAVLGVFSL…KDCDVLVGYK (96 aa)) are extracellular. The N-linked (GlcNAc...) asparagine glycan is linked to asparagine 34. A helical transmembrane segment spans residues 97-117 (AVYRISFAMAIFFFVFSLLMF). Topologically, residues 118-132 (KVKTSKDLRAAVHNG) are cytoplasmic. Residues 133–153 (FWFFKIAALIGIMVGSFYIPG) traverse the membrane as a helical segment. The Extracellular portion of the chain corresponds to 154 to 159 (GYFSSV). Residues 160–180 (WFVVGMIGAALFILIQLVLLV) traverse the membrane as a helical segment. Topologically, residues 181–203 (DFAHSWNESWVNRMEEGNPRLWY) are cytoplasmic. A helical transmembrane segment spans residues 204 to 224 (AALLSFTSAFYILSIICVGLL). The Extracellular segment spans residues 225–239 (YTYYTKPDGCTENKF). A helical membrane pass occupies residues 240-260 (FISINLILCVVASIISIHPKI). Residues 261 to 329 (QEHQPRSGLL…VPTPTPPSKS (69 aa)) are Cytoplasmic-facing. Residues 330–350 (GSLLDSDNFIGLFVFVLCLLY) form a helical membrane-spanning segment. Residues 351–406 (SSIRTSTNSQVDKLTLSGSDSVILGDTTTSGASDEEDGQPRRAVDNEKEGVQYSYS) are Extracellular-facing. Serine 371 bears the Phosphoserine mark. Residues 407-427 (LFHLMLCLASLYIMMTLTSWY) form a helical membrane-spanning segment. Over 428-446 (SPDAKFQSMTSKWPAVWVK) the chain is Cytoplasmic. A helical membrane pass occupies residues 447 to 467 (ISSSWVCLLLYVWTLVAPLVL). Residues 468 to 473 (TSRDFS) lie on the Extracellular side of the membrane.

It belongs to the TDE1 family. In terms of processing, N-glycosylated. Ubiquitous. Expression levels were increased fourfold to tenfold in lung tumor tissues compared with normal pulmonary tissues.

Its subcellular location is the cell membrane. The protein resides in the golgi apparatus membrane. It localises to the cytoplasm. It is found in the perinuclear region. The enzyme catalyses a 1,2-diacyl-sn-glycero-3-phospho-L-serine(in) = a 1,2-diacyl-sn-glycero-3-phospho-L-serine(out). It catalyses the reaction a 1,2-diacyl-sn-glycero-3-phosphocholine(in) = a 1,2-diacyl-sn-glycero-3-phosphocholine(out). It carries out the reaction a 1,2-diacyl-sn-glycero-3-phosphoethanolamine(in) = a 1,2-diacyl-sn-glycero-3-phosphoethanolamine(out). Its function is as follows. Restriction factor required to restrict infectivity of lentiviruses, such as HIV-1: acts by inhibiting an early step of viral infection. Impairs the penetration of the viral particle into the cytoplasm. Non-ATP-dependent, non-specific lipid transporter for phosphatidylserine, phosphatidylcholine, and phosphatidylethanolamine. Functions as a scramblase that flips lipids in both directions across the membrane. Phospholipid scrambling results in HIV-1 surface exposure of phosphatidylserine and loss of membrane asymmetry, which leads to changes in HIV-1 Env conformation and loss of infectivity. This is Serine incorporator 3 from Homo sapiens (Human).